We begin with the raw amino-acid sequence, 132 residues long: L-ectoine synthase (132 aa).

This sequence belongs to the ectoine synthase family.

The enzyme catalyses (2S)-4-acetamido-2-aminobutanoate = L-ectoine + H2O. It participates in amine and polyamine biosynthesis; ectoine biosynthesis; L-ectoine from L-aspartate 4-semialdehyde: step 3/3. Catalyzes the circularization of gamma-N-acetyl-alpha,gamma-diaminobutyric acid (ADABA) to ectoine (1,4,5,6-tetrahydro-2-methyl-4-pyrimidine carboxylic acid), which is an excellent osmoprotectant. In Teredinibacter turnerae (strain ATCC 39867 / T7901), this protein is L-ectoine synthase.